We begin with the raw amino-acid sequence, 232 residues long: Enolase-phosphatase E1 (232 aa).

Belongs to the HAD-like hydrolase superfamily. MasA/MtnC family. Monomer. It depends on Mg(2+) as a cofactor.

The catalysed reaction is 5-methylsulfanyl-2,3-dioxopentyl phosphate + H2O = 1,2-dihydroxy-5-(methylsulfanyl)pent-1-en-3-one + phosphate. The protein operates within amino-acid biosynthesis; L-methionine biosynthesis via salvage pathway; L-methionine from S-methyl-5-thio-alpha-D-ribose 1-phosphate: step 3/6. It participates in amino-acid biosynthesis; L-methionine biosynthesis via salvage pathway; L-methionine from S-methyl-5-thio-alpha-D-ribose 1-phosphate: step 4/6. Bifunctional enzyme that catalyzes the enolization of 2,3-diketo-5-methylthiopentyl-1-phosphate (DK-MTP-1-P) into the intermediate 2-hydroxy-3-keto-5-methylthiopentenyl-1-phosphate (HK-MTPenyl-1-P), which is then dephosphorylated to form the acireductone 1,2-dihydroxy-3-keto-5-methylthiopentene (DHK-MTPene). This Acidiphilium cryptum (strain JF-5) protein is Enolase-phosphatase E1.